Here is a 300-residue protein sequence, read N- to C-terminus: ESX-5 secretion-associated protein EspG5 (300 aa).

This sequence belongs to the EspG family. Interacts specifically with ESX-5-dependent PE/PPE proteins. Binds PPE33 and PPE18. Does not interact with EsxN. Monomer in solution.

It is found in the cytoplasm. Functionally, specific chaperone for cognate PE/PPE proteins. Plays an important role in preventing aggregation of PE/PPE dimers. Required for LipY and PE31/PPE18 secretion. This Mycobacterium marinum (strain ATCC BAA-535 / M) protein is ESX-5 secretion-associated protein EspG5.